The sequence spans 327 residues: MVVELKNIEKIYENGFHALKGVNLELKKGDILGVIGYSGAGKSTLIRLINCLERPSSGEVLVNGVNLLNLKPKELQKARQKIGMIFQHFNLLSAKNVFENVAFALEIARWEKNKIKSRVHELLELVGLEDKMHFYPKQLSGGQKQRVAIARSLANCPDLLLCDEATSALDSKTTHSILTLLSGIQKKLDLSIVFITHEIEVVKELCNQMCVISSGEIVERGLVEEIFANPKHAVTKELLGIKNEHGDQKCQDVYRIVFLGEHLDEPIISNLIRRFKIDVSIISGNIEELTTKDIGYLVVRFLGSTTETQRALEYLNALGLQVEKLKD.

One can recognise an ABC transporter domain in the interval Val-3–Leu-239. Gly-36–Ser-43 contributes to the ATP binding site.

It belongs to the ABC transporter superfamily. Methionine importer (TC 3.A.1.24) family. The complex is composed of two ATP-binding proteins (MetN), two transmembrane proteins (MetI) and a solute-binding protein (MetQ).

The protein localises to the cell inner membrane. The catalysed reaction is L-methionine(out) + ATP + H2O = L-methionine(in) + ADP + phosphate + H(+). It catalyses the reaction D-methionine(out) + ATP + H2O = D-methionine(in) + ADP + phosphate + H(+). Functionally, part of the ABC transporter complex MetNIQ involved in methionine import. Responsible for energy coupling to the transport system. This chain is Methionine import ATP-binding protein MetN, found in Helicobacter pylori (strain HPAG1).